Here is a 306-residue protein sequence, read N- to C-terminus: Acetyl-coenzyme A carboxylase carboxyl transferase subunit beta (306 aa).

One can recognise a CoA carboxyltransferase N-terminal domain in the interval 25 to 294 (LWIKDPTSGE…VVTPSPPSPT (270 aa)). Residues 284–306 (AVVTPSPPSPTDSQTSLSKTKAA) form a disordered region.

This sequence belongs to the AccD/PCCB family. As to quaternary structure, acetyl-CoA carboxylase is a heterohexamer composed of biotin carboxyl carrier protein (AccB), biotin carboxylase (AccC) and two subunits each of ACCase subunit alpha (AccA) and ACCase subunit beta (AccD).

The protein resides in the cytoplasm. The catalysed reaction is N(6)-carboxybiotinyl-L-lysyl-[protein] + acetyl-CoA = N(6)-biotinyl-L-lysyl-[protein] + malonyl-CoA. Its pathway is lipid metabolism; malonyl-CoA biosynthesis; malonyl-CoA from acetyl-CoA: step 1/1. Functionally, component of the acetyl coenzyme A carboxylase (ACC) complex. Biotin carboxylase (BC) catalyzes the carboxylation of biotin on its carrier protein (BCCP) and then the CO(2) group is transferred by the transcarboxylase to acetyl-CoA to form malonyl-CoA. This chain is Acetyl-coenzyme A carboxylase carboxyl transferase subunit beta, found in Bartonella tribocorum (strain CIP 105476 / IBS 506).